Here is a 173-residue protein sequence, read N- to C-terminus: Ribosome maturation factor RimM (173 aa).

A PRC barrel domain is found at 92-165 (EGEFYHADLI…RVVIEAPAEI (74 aa)).

Belongs to the RimM family. In terms of assembly, binds ribosomal protein uS19.

The protein localises to the cytoplasm. In terms of biological role, an accessory protein needed during the final step in the assembly of 30S ribosomal subunit, possibly for assembly of the head region. Essential for efficient processing of 16S rRNA. May be needed both before and after RbfA during the maturation of 16S rRNA. It has affinity for free ribosomal 30S subunits but not for 70S ribosomes. The chain is Ribosome maturation factor RimM from Nitrobacter winogradskyi (strain ATCC 25391 / DSM 10237 / CIP 104748 / NCIMB 11846 / Nb-255).